The primary structure comprises 187 residues: Putative AgrB-like protein 1 (187 aa).

The next 5 membrane-spanning stretches (helical) occupy residues 29–49, 50–70, 81–98, 103–120, and 149–169; these read VVIV…IAGI, LGYF…KPFI, CFIA…LVTF, LFSI…IYNK, and ILFL…TITW.

The protein belongs to the AgrB family.

The protein localises to the cell membrane. Its function is as follows. May be involved in the proteolytic processing of a quorum sensing system signal molecule precursor. This Clostridium perfringens (strain 13 / Type A) protein is Putative AgrB-like protein 1.